The chain runs to 249 residues: 5'-nucleotidase SurE (249 aa).

The a divalent metal cation site is built by Asp8, Asp9, Ser39, and Asn96.

The protein belongs to the SurE nucleotidase family. It depends on a divalent metal cation as a cofactor.

It localises to the cytoplasm. It carries out the reaction a ribonucleoside 5'-phosphate + H2O = a ribonucleoside + phosphate. Its function is as follows. Nucleotidase that shows phosphatase activity on nucleoside 5'-monophosphates. This chain is 5'-nucleotidase SurE, found in Clostridium tetani (strain Massachusetts / E88).